The following is a 247-amino-acid chain: 1-(5-phosphoribosyl)-5-[(5-phosphoribosylamino)methylideneamino] imidazole-4-carboxamide isomerase (247 aa).

Asp8 functions as the Proton acceptor in the catalytic mechanism. The active-site Proton donor is Asp131.

Belongs to the HisA/HisF family.

The protein resides in the cytoplasm. The catalysed reaction is 1-(5-phospho-beta-D-ribosyl)-5-[(5-phospho-beta-D-ribosylamino)methylideneamino]imidazole-4-carboxamide = 5-[(5-phospho-1-deoxy-D-ribulos-1-ylimino)methylamino]-1-(5-phospho-beta-D-ribosyl)imidazole-4-carboxamide. Its pathway is amino-acid biosynthesis; L-histidine biosynthesis; L-histidine from 5-phospho-alpha-D-ribose 1-diphosphate: step 4/9. This Cupriavidus metallidurans (strain ATCC 43123 / DSM 2839 / NBRC 102507 / CH34) (Ralstonia metallidurans) protein is 1-(5-phosphoribosyl)-5-[(5-phosphoribosylamino)methylideneamino] imidazole-4-carboxamide isomerase.